The sequence spans 427 residues: Ribosomal protein uS12 methylthiotransferase RimO (427 aa).

In terms of domain architecture, MTTase N-terminal spans 1-116; it reads MNFYVEVLGC…IATHIGKRNV (116 aa). Residues Cys10, Cys46, Cys79, Cys145, Cys149, and Cys152 each coordinate [4Fe-4S] cluster. Residues 131–360 enclose the Radical SAM core domain; the sequence is VDNGQYAYVK…MDIQSQISFE (230 aa). Positions 363–426 constitute a TRAM domain; that stretch reads EKLVGKKLKV…IYDLEGEIVE (64 aa).

Belongs to the methylthiotransferase family. RimO subfamily. [4Fe-4S] cluster serves as cofactor.

The protein localises to the cytoplasm. The enzyme catalyses L-aspartate(89)-[ribosomal protein uS12]-hydrogen + (sulfur carrier)-SH + AH2 + 2 S-adenosyl-L-methionine = 3-methylsulfanyl-L-aspartate(89)-[ribosomal protein uS12]-hydrogen + (sulfur carrier)-H + 5'-deoxyadenosine + L-methionine + A + S-adenosyl-L-homocysteine + 2 H(+). Functionally, catalyzes the methylthiolation of an aspartic acid residue of ribosomal protein uS12. This chain is Ribosomal protein uS12 methylthiotransferase RimO, found in Thermosipho melanesiensis (strain DSM 12029 / CIP 104789 / BI429).